Consider the following 98-residue polypeptide: NADH-ubiquinone oxidoreductase chain 4L (98 aa).

3 helical membrane passes run 1–21 (MSPV…GLAF), 26–46 (LLSA…AIAL), and 61–81 (MILL…LVAA).

The protein belongs to the complex I subunit 4L family.

The protein resides in the mitochondrion membrane. The catalysed reaction is a ubiquinone + NADH + 5 H(+)(in) = a ubiquinol + NAD(+) + 4 H(+)(out). In terms of biological role, core subunit of the mitochondrial membrane respiratory chain NADH dehydrogenase (Complex I) which catalyzes electron transfer from NADH through the respiratory chain, using ubiquinone as an electron acceptor. Part of the enzyme membrane arm which is embedded in the lipid bilayer and involved in proton translocation. The sequence is that of NADH-ubiquinone oxidoreductase chain 4L (MT-ND4L) from Squalus acanthias (Spiny dogfish).